The sequence spans 230 residues: PsbP-like protein 1, chloroplastic (230 aa).

The protein belongs to the PsbP family.

Its subcellular location is the plastid. It localises to the chloroplast thylakoid lumen. Required for efficient repair of photodamaged PSII, but not tightly associated with the complex. This is PsbP-like protein 1, chloroplastic (PPL1) from Arabidopsis thaliana (Mouse-ear cress).